Here is a 314-residue protein sequence, read N- to C-terminus: Mitotic checkpoint protein BUB3.3 (314 aa).

WD repeat units lie at residues 11–50 (PIED…LSLE), 52–90 (NSQA…VDTI), 92–131 (RHDD…SLVF), 134–173 (DAGG…QSYA), 176–215 (VEVP…SEIK), 229–269 (LDGV…RLNE), and 272–311 (RYSN…QVFI).

This sequence belongs to the WD repeat BUB3 family. As to quaternary structure, part of the mitotic checkpoint complex (MCC).

The protein resides in the nucleus. The protein localises to the chromosome. It is found in the centromere. Its subcellular location is the kinetochore. It localises to the cytoplasm. The protein resides in the cytoskeleton. The protein localises to the phragmoplast. It is found in the spindle. Functionally, has a dual function in spindle-assembly checkpoint signaling and in promoting the establishment of correct kinetochore-microtubule (K-MT) attachments. Promotes the formation of stable end-on bipolar attachments. Necessary for kinetochore localization of BUB1. The BUB1/BUB3 complex plays a role in the inhibition of anaphase-promoting complex or cyclosome (APC/C) when spindle-assembly checkpoint is activated and inhibits the ubiquitin ligase activity of APC/C by phosphorylating its activator CDC20. The protein is Mitotic checkpoint protein BUB3.3 (BUB3.3) of Arabidopsis thaliana (Mouse-ear cress).